Reading from the N-terminus, the 240-residue chain is Keratinocyte-associated protein 3 (240 aa).

The next 4 helical transmembrane spans lie at 21–41 (VGLA…VLHG), 63–83 (VISV…LLAS), 95–115 (LLAL…GLLL), and 163–183 (ALAL…LSGY).

The protein belongs to the TMEM54 family.

The protein localises to the membrane. The chain is Keratinocyte-associated protein 3 (KRTCAP3) from Bos taurus (Bovine).